The primary structure comprises 229 residues: Transmembrane protein 182 (229 aa).

Positions methionine 1–glycine 26 are cleaved as a signal peptide. The Extracellular portion of the chain corresponds to serine 27–glycine 114. N-linked (GlcNAc...) asparagine glycosylation is present at asparagine 47. An interaction with ITGB1 region spans residues threonine 49 to cysteine 59. N-linked (GlcNAc...) asparagine glycosylation is present at asparagine 102. The chain crosses the membrane as a helical span at residues phenylalanine 115–isoleucine 135. The Cytoplasmic segment spans residues cysteine 136–tyrosine 153. A helical transmembrane segment spans residues isoleucine 154–valine 174. The Extracellular portion of the chain corresponds to alanine 175–serine 200. A helical transmembrane segment spans residues phenylalanine 201–valine 221. Residues glycine 222–histidine 229 lie on the Cytoplasmic side of the membrane.

This sequence belongs to the TMEM182 family. As to quaternary structure, interacts with ITGB1.

It localises to the cell membrane. Its function is as follows. Negatively regulates myogenesis and skeletal muscle regeneration via its association with ITGB1. Modulates ITGB1 activation by decreasing ITGB1-LAMB1 interaction and inhibiting ITGB1-mediated intracellular signaling during myogenesis. The protein is Transmembrane protein 182 (TMEM182) of Homo sapiens (Human).